The sequence spans 213 residues: Mite allergen Der f 7 (213 aa).

The N-terminal stretch at methionine 1–alanine 17 is a signal peptide. Asparagine 151 carries an N-linked (GlcNAc...) asparagine glycan.

The protein belongs to the mite group 7 allergen family.

The protein resides in the secreted. In Dermatophagoides farinae (American house dust mite), this protein is Mite allergen Der f 7 (DERF7).